Reading from the N-terminus, the 173-residue chain is Glucagon family neuropeptides (173 aa).

An N-terminal signal peptide occupies residues 1–22 (MSSKATLALLIYGIIMHYSVYS). Residues 23 to 80 (SPLGLNYPNLRLENEVYDEDGNSLPALAFDSDQIAIRSPPSVADDLYTLYYPPEKGTE) constitute a propeptide that is removed on maturation. Lys166 is subject to Lysine amide. Residues 170-173 (LGYL) constitute a propeptide that is removed on maturation.

The protein belongs to the glucagon family.

It localises to the secreted. Functionally, primary role of GHRH is to release GH from the pituitary. In terms of biological role, PACAP plays pivotal roles as a neurotransmitter and/or a neuromodulator. The polypeptide is Glucagon family neuropeptides (Oncorhynchus nerka (Sockeye salmon)).